The following is a 419-amino-acid chain: Potassium/proton antiporter CemA (419 aa).

4 helical membrane passes run 196–216, 297–317, 344–364, and 371–391; these read LASI…TLLF, IIEL…LCIA, ILLI…EVLI, and FGFV…PVVL.

This sequence belongs to the CemA family.

The protein resides in the plastid. It localises to the chloroplast inner membrane. The enzyme catalyses K(+)(in) + H(+)(out) = K(+)(out) + H(+)(in). Functionally, contributes to K(+)/H(+) antiport activity by supporting proton efflux to control proton extrusion and homeostasis in chloroplasts in a light-dependent manner to modulate photosynthesis. Prevents excessive induction of non-photochemical quenching (NPQ) under continuous-light conditions. Indirectly promotes efficient inorganic carbon uptake into chloroplasts. This is Potassium/proton antiporter CemA from Chara vulgaris (Common stonewort).